A 93-amino-acid chain; its full sequence is Toxin RelE1 (93 aa).

This sequence belongs to the RelE toxin family.

Its function is as follows. Toxic component of a type II toxin-antitoxin (TA) system. Its toxic effect is neutralized by coexpression with cognate antitoxin RelB1 but no other ParD or RelB antitoxin. The sequence is that of Toxin RelE1 (relE1) from Caulobacter vibrioides (strain ATCC 19089 / CIP 103742 / CB 15) (Caulobacter crescentus).